We begin with the raw amino-acid sequence, 416 residues long: Na(+)/H(+) antiporter NhaA (416 aa).

Transmembrane regions (helical) follow at residues 18 to 38 (VGGAILLVAAAIALLWVNSPW), 59 to 79 (LTLADWTKDGLLAVFFFVAGL), 97 to 117 (ALPIIAAVGGVVTPALIAAVI), 127 to 147 (GWAIPVATDIAFALGVLALTG), 167 to 187 (LLAIILIAVLFTVGVSLLWLL), 265 to 285 (GICVPLFALFAAGVPLNATVF), 297 to 317 (VMLGLLLGKTIGIFGISWVAI), 333 to 353 (MFALSVLGAIGFTVSLLVAEL), and 363 to 383 (LAKAAVLITSLAASLAGSALL). The segment at 396-416 (ALELQPDEGDASDPSEGGSLR) is disordered.

This sequence belongs to the NhaA Na(+)/H(+) (TC 2.A.33) antiporter family.

The protein localises to the cell membrane. The enzyme catalyses Na(+)(in) + 2 H(+)(out) = Na(+)(out) + 2 H(+)(in). Functionally, na(+)/H(+) antiporter that extrudes sodium in exchange for external protons. The polypeptide is Na(+)/H(+) antiporter NhaA (Nocardia farcinica (strain IFM 10152)).